The sequence spans 178 residues: ATP-dependent protease subunit HslV (178 aa).

Thr-7 is an active-site residue. Residues Gly-162, Cys-165, and Thr-168 each contribute to the Na(+) site.

This sequence belongs to the peptidase T1B family. HslV subfamily. As to quaternary structure, a double ring-shaped homohexamer of HslV is capped on each side by a ring-shaped HslU homohexamer. The assembly of the HslU/HslV complex is dependent on binding of ATP.

The protein resides in the cytoplasm. It catalyses the reaction ATP-dependent cleavage of peptide bonds with broad specificity.. With respect to regulation, allosterically activated by HslU binding. Functionally, protease subunit of a proteasome-like degradation complex believed to be a general protein degrading machinery. This is ATP-dependent protease subunit HslV from Cupriavidus pinatubonensis (strain JMP 134 / LMG 1197) (Cupriavidus necator (strain JMP 134)).